Consider the following 407-residue polypeptide: Carbamoyl phosphate synthase small chain (407 aa).

A CPSase region spans residues 1–205 (MTETTPKTAP…LQDGYGEQDA (205 aa)). Residues S60, G257, and G259 each contribute to the L-glutamine site. In terms of domain architecture, Glutamine amidotransferase type-1 spans 209 to 397 (HVVALDFGVK…INLIRERKGQ (189 aa)). C286 functions as the Nucleophile in the catalytic mechanism. Residues L287, Q290, N328, G330, and F331 each coordinate L-glutamine. Residues H370 and E372 contribute to the active site.

The protein belongs to the CarA family. As to quaternary structure, composed of two chains; the small (or glutamine) chain promotes the hydrolysis of glutamine to ammonia, which is used by the large (or ammonia) chain to synthesize carbamoyl phosphate. Tetramer of heterodimers (alpha,beta)4.

It carries out the reaction hydrogencarbonate + L-glutamine + 2 ATP + H2O = carbamoyl phosphate + L-glutamate + 2 ADP + phosphate + 2 H(+). It catalyses the reaction L-glutamine + H2O = L-glutamate + NH4(+). It functions in the pathway amino-acid biosynthesis; L-arginine biosynthesis; carbamoyl phosphate from bicarbonate: step 1/1. Its pathway is pyrimidine metabolism; UMP biosynthesis via de novo pathway; (S)-dihydroorotate from bicarbonate: step 1/3. Functionally, small subunit of the glutamine-dependent carbamoyl phosphate synthetase (CPSase). CPSase catalyzes the formation of carbamoyl phosphate from the ammonia moiety of glutamine, carbonate, and phosphate donated by ATP, constituting the first step of 2 biosynthetic pathways, one leading to arginine and/or urea and the other to pyrimidine nucleotides. The small subunit (glutamine amidotransferase) binds and cleaves glutamine to supply the large subunit with the substrate ammonia. This is Carbamoyl phosphate synthase small chain from Brucella canis (strain ATCC 23365 / NCTC 10854 / RM-666).